The primary structure comprises 141 residues: MSIERTLSIIKPDAVAKNVVGQIVARFEQAGLKVIAARMQQLSRTDAERFYAVHKERPFFKDLVDFMVSGPVFVQVLEGESAIQKNRDLMGATDPKKAAPGTIRADFADSIDANAVHGSDAPETAAVEVAFFFPEINIHSR.

Residues Lys-11, Phe-59, Arg-87, Thr-93, Arg-104, and Asn-114 each contribute to the ATP site. Catalysis depends on His-117, which acts as the Pros-phosphohistidine intermediate.

Belongs to the NDK family. Homotetramer. Requires Mg(2+) as cofactor.

The protein resides in the cytoplasm. The enzyme catalyses a 2'-deoxyribonucleoside 5'-diphosphate + ATP = a 2'-deoxyribonucleoside 5'-triphosphate + ADP. It carries out the reaction a ribonucleoside 5'-diphosphate + ATP = a ribonucleoside 5'-triphosphate + ADP. In terms of biological role, major role in the synthesis of nucleoside triphosphates other than ATP. The ATP gamma phosphate is transferred to the NDP beta phosphate via a ping-pong mechanism, using a phosphorylated active-site intermediate. This Bordetella bronchiseptica (strain ATCC BAA-588 / NCTC 13252 / RB50) (Alcaligenes bronchisepticus) protein is Nucleoside diphosphate kinase.